Consider the following 276-residue polypeptide: Radial spoke head protein 9 homolog (276 aa).

It belongs to the flagellar radial spoke RSP9 family. In terms of assembly, component of the axonemal radial spoke 1 (RS1) and 2 (RS2) complexes, at least composed of spoke head proteins RSPH1, RSPH3, RSPH9 and the cilia-specific component RSPH4A or sperm-specific component RSPH6A, spoke stalk proteins RSPH14, DNAJB13, DYDC1, ROPN1L and NME5, and the RS1 complex-specific anchor protein IQUB. Interacts with IQUB. Interacts with RSPH3B. Interacts with RSPH4A. Interacts with RSPH6A. Interacts with CFAP61. Interacts with LRRC23.

It is found in the cytoplasm. It localises to the cytoskeleton. Its subcellular location is the cilium axoneme. The protein localises to the flagellum axoneme. The protein resides in the cell projection. It is found in the kinocilium. Functionally, functions as part of axonemal radial spoke complexes that play an important part in the motility of sperm and cilia. Essential for both the radial spoke head assembly and the central pair microtubule stability in ependymal motile cilia. Required for motility of olfactory and neural cilia and for the structural integrity of ciliary axonemes in both 9+0 and 9+2 motile cilia. In Bos taurus (Bovine), this protein is Radial spoke head protein 9 homolog (RSPH9).